Consider the following 228-residue polypeptide: Protein LIAT1 (228 aa).

The segment at 1-108 (MAGRGGTGAA…RAEPRDKEEN (108 aa)) is disordered. Over residues 12 to 24 (YGEEGEEEEEEEA) the composition is skewed to acidic residues. Residues 49–71 (KRKVKKKKKKKKTKGSGKGDADK) form a lysine-rich domain region. Basic residues predominate over residues 50–63 (RKVKKKKKKKKTKG). Positions 90 to 108 (LNPHKDHGLRAEPRDKEEN) are enriched in basic and acidic residues. Positions 113–165 (PYSYSINHPCFAEIEDTLSSQINESLRWDGILTDPEAEKERIRIYKLNRRKRY) are interaction with ATE1. The stretch at 169 to 178 (ALKCFHSDPC) is repeat 1.

Self-associates (via Lys-rich domain); targets LIAT1 to the nucleolus. Interacts with ATE1; it is not a substrate of ATE1, the interaction takes place in the cytoplasm and seems to increase ATE1 arginyltransferase activity. Interacts with JMJD6 and MRPS14. In terms of processing, post-translationally modified by JMJD6 lysyl-hydroxylase activity at its Lys-rich domain, which inhibits its self-association and nucleolar localization. Highly expressed in spleen, thymus, liver and brown adipose tissue. Moderately expressed in liver, testis and lung.

It is found in the nucleus. It localises to the nucleolus. The protein resides in the cytoplasm. In terms of biological role, participates in nucleolar liquid-liquid phase separation (LLPS) through its N-terminal intrinsically disordered region (IDR). May be involved in ATE1-mediated N-terminal arginylation. This Mus musculus (Mouse) protein is Protein LIAT1.